The sequence spans 343 residues: tRNA N6-adenosine threonylcarbamoyltransferase (343 aa).

Histidine 115 and histidine 119 together coordinate Fe cation. Residues 137–141 (IVSGG), aspartate 170, glycine 183, aspartate 187, and asparagine 276 contribute to the substrate site. Aspartate 304 serves as a coordination point for Fe cation.

The protein belongs to the KAE1 / TsaD family. Fe(2+) is required as a cofactor.

The protein localises to the cytoplasm. The catalysed reaction is L-threonylcarbamoyladenylate + adenosine(37) in tRNA = N(6)-L-threonylcarbamoyladenosine(37) in tRNA + AMP + H(+). Functionally, required for the formation of a threonylcarbamoyl group on adenosine at position 37 (t(6)A37) in tRNAs that read codons beginning with adenine. Is involved in the transfer of the threonylcarbamoyl moiety of threonylcarbamoyl-AMP (TC-AMP) to the N6 group of A37, together with TsaE and TsaB. TsaD likely plays a direct catalytic role in this reaction. This Staphylococcus carnosus (strain TM300) protein is tRNA N6-adenosine threonylcarbamoyltransferase.